A 152-amino-acid polypeptide reads, in one-letter code: Bacchus (152 aa).

Positions aspartate 29–alanine 41 are enriched in basic and acidic residues. Positions aspartate 29–alanine 152 are disordered. A compositionally biased stretch (low complexity) spans alanine 42–aspartate 51. The segment covering glutamate 72–lysine 89 has biased composition (basic and acidic residues). Acidic residues predominate over residues glycine 99–alanine 152.

As to expression, expressed in the brain.

Its subcellular location is the nucleus. Its function is as follows. Negatively regulates tyramine beta-hydroxylase tbh and thus the conversion of tyramine (TA) to octopamine (OA). In tyrosine decarboxylase 2 (Tdc2) neurons, acts in an amine-mediated signaling pathway to negatively regulate acute ethanol sensitivity probably via tbh-mediated depletion of TA. In Drosophila melanogaster (Fruit fly), this protein is Bacchus.